A 601-amino-acid polypeptide reads, in one-letter code: HIRA-interacting protein 3 (601 aa).

Disordered regions lie at residues 60–469 (KMQA…EDHP) and 546–601 (STGR…GDSS). Positions 66–76 (GTREGKPDFIK) are enriched in basic and acidic residues. Phosphoserine is present on residues Ser-85, Ser-96, and Ser-98. Low complexity predominate over residues 97–113 (ESESSSSPSSPDGSGPS). The segment covering 117–129 (RTTKKTCLRRALK) has biased composition (basic residues). Over residues 130–149 (KAVESTDEDHQTDLDAKMGL) the composition is skewed to basic and acidic residues. Ser-134 carries the post-translational modification Phosphoserine. A phosphothreonine mark is found at Thr-135 and Thr-141. Phosphoserine occurs at positions 152, 153, and 163. Phosphothreonine is present on Thr-167. Basic and acidic residues predominate over residues 186–205 (GAKDKQVPLKADRKQVREES). A phosphoserine mark is found at Ser-205, Ser-207, Ser-208, Ser-231, Ser-234, Ser-238, Ser-313, Ser-359, Ser-360, Ser-384, and Ser-389. 2 stretches are compositionally biased toward basic and acidic residues: residues 238–264 (SPAK…ERKS) and 313–324 (SSEKGEAEKEEG). Over residues 347-378 (RTQTESGRRQNTSSRDDSNSTQEQAAAQGTTK) the composition is skewed to polar residues. A compositionally biased stretch (low complexity) spans 379–388 (SGSLGSSNGD). Thr-391 bears the Phosphothreonine mark. Residues Ser-396 and Ser-398 each carry the phosphoserine modification. The segment covering 413–432 (SNKSSKNGQARSCSSSSDSS) has biased composition (low complexity). The segment at 429-572 (SDSSPEPTGQ…TSPGETYRRT (144 aa)) is interaction with the histone H2A-H2B complex. Residues 556-566 (WNPSGEGTSPG) are compositionally biased toward polar residues. 5 positions are modified to phosphoserine: Ser-564, Ser-575, Ser-595, Ser-596, and Ser-600. Residues 568–580 (TYRRTLDSEEEQP) are compositionally biased toward basic and acidic residues.

Interacts (via C-terminus) with histone H2A-H2B dimers; the interaction is direct. Interacts with HIRA. Interacts with CK2. Phosphorylated by CK2.

Its subcellular location is the nucleus. In terms of biological role, histone chaperone that carries a H2A-H2B histone complex and facilitates its deposition onto chromatin. The chain is HIRA-interacting protein 3 from Mus musculus (Mouse).